The chain runs to 532 residues: Tyrosinase (532 aa).

The N-terminal stretch at 1-22 (MESTTVLLAASTLLLVLHASYG) is a signal peptide. Residues 23–479 (QFPRACSTAQ…LEQARQIWQW (457 aa)) lie on the Lumenal, melanosome side of the membrane. Asparagine 90, asparagine 115, and asparagine 165 each carry an N-linked (GlcNAc...) asparagine glycan. Histidine 184, histidine 206, and histidine 215 together coordinate Cu cation. Asparagine 234 and asparagine 341 each carry an N-linked (GlcNAc...) asparagine glycan. 2 residues coordinate Cu cation: histidine 367 and histidine 371. An N-linked (GlcNAc...) asparagine glycan is attached at asparagine 375. Histidine 394 provides a ligand contact to Cu cation. The helical transmembrane segment at 480-500 (LLGAAVVGGLVTAVIATIISL) threads the bilayer. The Cytoplasmic segment spans residues 501 to 532 (TCRRKRRTKTSEETRPLLMEAEDYHATYQSNL).

The protein belongs to the tyrosinase family. As to quaternary structure, active tyrosinase has been found as a homodimer and homotetramer. Requires Cu(2+) as cofactor. Frog skin.

It localises to the melanosome membrane. The catalysed reaction is 2 L-dopa + O2 = 2 L-dopaquinone + 2 H2O. The enzyme catalyses L-tyrosine + O2 = L-dopaquinone + H2O. Activated by trypsin, chymotrypsin and subtilisin. Activated by alpha-chymotrypsin, thermolysin and Pronase. Inhibited by its product L-DOPA and tyrosine. In terms of biological role, this is a copper-containing oxidase that functions in the formation of pigments such as melanins and other polyphenolic compounds. Catalyzes the initial and rate limiting step in the cascade of reactions leading to melanin production from tyrosine. In addition to hydroxylating tyrosine to DOPA (3,4-dihydroxyphenylalanine), also catalyzes the oxidation of DOPA to DOPA-quinone. The chain is Tyrosinase from Pelophylax lessonae (Pool frog).